Here is a 273-residue protein sequence, read N- to C-terminus: Formamidopyrimidine-DNA glycosylase (273 aa).

Catalysis depends on Pro-2, which acts as the Schiff-base intermediate with DNA. Glu-3 (proton donor) is an active-site residue. Lys-58 acts as the Proton donor; for beta-elimination activity in catalysis. DNA contacts are provided by His-91, Arg-110, and Arg-153. The segment at 238–272 adopts an FPG-type zinc-finger fold; that stretch reads KVYGKEGQPCPRCGEDFVKIKISGRGTTYCLHCQK. Arg-262 (proton donor; for delta-elimination activity) is an active-site residue.

This sequence belongs to the FPG family. In terms of assembly, monomer. Zn(2+) is required as a cofactor.

The enzyme catalyses Hydrolysis of DNA containing ring-opened 7-methylguanine residues, releasing 2,6-diamino-4-hydroxy-5-(N-methyl)formamidopyrimidine.. It carries out the reaction 2'-deoxyribonucleotide-(2'-deoxyribose 5'-phosphate)-2'-deoxyribonucleotide-DNA = a 3'-end 2'-deoxyribonucleotide-(2,3-dehydro-2,3-deoxyribose 5'-phosphate)-DNA + a 5'-end 5'-phospho-2'-deoxyribonucleoside-DNA + H(+). Functionally, involved in base excision repair of DNA damaged by oxidation or by mutagenic agents. Acts as a DNA glycosylase that recognizes and removes damaged bases. Has a preference for oxidized purines, such as 7,8-dihydro-8-oxoguanine (8-oxoG). Has AP (apurinic/apyrimidinic) lyase activity and introduces nicks in the DNA strand. Cleaves the DNA backbone by beta-delta elimination to generate a single-strand break at the site of the removed base with both 3'- and 5'-phosphates. This Lactobacillus delbrueckii subsp. bulgaricus (strain ATCC 11842 / DSM 20081 / BCRC 10696 / JCM 1002 / NBRC 13953 / NCIMB 11778 / NCTC 12712 / WDCM 00102 / Lb 14) protein is Formamidopyrimidine-DNA glycosylase.